The chain runs to 752 residues: Polyribonucleotide nucleotidyltransferase (752 aa).

Residues Asp-542 and Asp-548 each contribute to the Mg(2+) site. The region spanning 608–667 (PRITTIQIPVSKIGELIGPKGKNINALTEETGANISIEDDGTVFISAASGEAAEAAIEKI) is the KH domain. The 70-residue stretch at 679–748 (GERFLGTVVK…NRGKISLVPV (70 aa)) folds into the S1 motif domain.

It belongs to the polyribonucleotide nucleotidyltransferase family. It depends on Mg(2+) as a cofactor.

The protein localises to the cytoplasm. It carries out the reaction RNA(n+1) + phosphate = RNA(n) + a ribonucleoside 5'-diphosphate. Its function is as follows. Involved in mRNA degradation. Catalyzes the phosphorolysis of single-stranded polyribonucleotides processively in the 3'- to 5'-direction. The protein is Polyribonucleotide nucleotidyltransferase of Corynebacterium efficiens (strain DSM 44549 / YS-314 / AJ 12310 / JCM 11189 / NBRC 100395).